The following is an 85-amino-acid chain: RNA-binding protein Hfq (85 aa).

Positions 9–68 constitute a Sm domain; that stretch reads DPFLNALRRERIPVSIYLVNGIKLQGQIESFDQFVILLKNTVNQMVYKHAISTVVPARPV. The tract at residues 66–85 is disordered; sequence RPVNHHHASDRPATLEKTEE. Basic and acidic residues predominate over residues 72–85; that stretch reads HASDRPATLEKTEE.

The protein belongs to the Hfq family. In terms of assembly, homohexamer.

In terms of biological role, RNA chaperone that binds small regulatory RNA (sRNAs) and mRNAs to facilitate mRNA translational regulation in response to envelope stress, environmental stress and changes in metabolite concentrations. Also binds with high specificity to tRNAs. This is RNA-binding protein Hfq from Photobacterium profundum (strain SS9).